The sequence spans 205 residues: RNA pyrophosphohydrolase (205 aa).

Residues glycine 6–arginine 149 enclose the Nudix hydrolase domain. The Nudix box motif lies at glycine 38 to glycine 59. The segment at glycine 178–aspartate 205 is disordered. A compositionally biased stretch (basic residues) spans proline 187–glycine 196.

This sequence belongs to the Nudix hydrolase family. RppH subfamily. A divalent metal cation serves as cofactor.

Its function is as follows. Accelerates the degradation of transcripts by removing pyrophosphate from the 5'-end of triphosphorylated RNA, leading to a more labile monophosphorylated state that can stimulate subsequent ribonuclease cleavage. The polypeptide is RNA pyrophosphohydrolase (Xanthomonas axonopodis pv. citri (strain 306)).